Consider the following 281-residue polypeptide: Urease accessory protein UreD (281 aa).

This sequence belongs to the UreD family. As to quaternary structure, ureD, UreF and UreG form a complex that acts as a GTP-hydrolysis-dependent molecular chaperone, activating the urease apoprotein by helping to assemble the nickel containing metallocenter of UreC. The UreE protein probably delivers the nickel.

It localises to the cytoplasm. Its function is as follows. Required for maturation of urease via the functional incorporation of the urease nickel metallocenter. The chain is Urease accessory protein UreD from Pseudomonas savastanoi pv. phaseolicola (strain 1448A / Race 6) (Pseudomonas syringae pv. phaseolicola (strain 1448A / Race 6)).